The chain runs to 172 residues: Podoplanin (172 aa).

Residues 1–22 (MWTVPVLFWVLGSVWFWDSAQG) form the signal peptide. Residues 23–141 (GTIGVNEDDI…KKDGLPVVTL (119 aa)) lie on the Extracellular side of the membrane. Thr37, Thr51, Thr52, Thr53, and Thr56 each carry an O-linked (GalNAc...) threonine glycan. Residues 49-132 (KITTTGATGG…AGDETQTTDK (84 aa)) are disordered. The segment covering 51–63 (TTTGATGGLNEST) has biased composition (polar residues). Residue Asn60 is glycosylated (N-linked (GlcNAc...) asparagine). Residues Thr63, Thr71, and Thr77 are each glycosylated (O-linked (GalNAc...) threonine). Over residues 72-81 (QRERGTKPPL) the composition is skewed to basic and acidic residues. A glycan (O-linked (GalNAc...) serine) is linked at Ser85. Thr86 is a glycosylation site (O-linked (GalNAc...) threonine). The O-linked (GalNAc...) serine glycan is linked to Ser87. Thr89 carries O-linked (GalNAc...) threonine glycosylation. An O-linked (GalNAc...) serine glycan is attached at Ser90. The span at 90 to 99 (SDHDHREHES) shows a compositional bias: basic and acidic residues. 5 O-linked (GalNAc...) threonine glycosylation sites follow: Thr100, Thr101, Thr102, Thr107, and Thr115. Residues 100-109 (TTTVKVVTSH) are compositionally biased toward low complexity. The segment covering 110-132 (SVDKKTSHPNRDNAGDETQTTDK) has biased composition (basic and acidic residues). The chain crosses the membrane as a helical span at residues 142–162 (VGIIVGVLLAIGFVGGIFIVV). A requires for dimerization and lipidd rafts association region spans residues 143 to 147 (GIIVG). At 163-172 (MKKISGRFSP) the chain is on the cytoplasmic side. Residues 164–165 (KK) are requires for interaction with MSN and EZR.

Belongs to the podoplanin family. As to quaternary structure, homodimer. Interacts with CLEC1B; the interaction is independent of CLEC1B glycosylation and activates CLEC1B; the interaction is dependent of sialic acid on O-glycans. Interacts with CD9; this interaction is homophilic and attenuates platelet aggregation and pulmonary metastasis induced by PDPN. Interacts with LGALS8; the interaction is glycosylation-dependent; may participate in connection of the lymphatic endothelium to the surrounding extracellular matrix. Interacts with HSPA9. Interacts (via extracellular domain) with CD44; this interaction is required for PDPN-mediated directional migration and regulation of lamellipodia extension/stabilization during cell spreading and migration. Interacts (via cytoplasmic domain) with MSN and EZR; activates RHOA and promotes epithelial-mesenchymal transition. Interacts with CCL21; relocalized PDPN to the basolateral membrane. Post-translationally, extensively O-glycosylated. Contains sialic acid residues. O-glycosylation is necessary for platelet aggregation activity. Disialylated at Thr-52; sialic acid is critical for platelet-aggregating activity and for CLEC1B interaction. In terms of processing, phosphorylated by PKA; decreases cell migration. The N-terminus is blocked. In terms of tissue distribution, detected at high levels in lung and brain, at lower levels in kidney, stomach, liver, spleen and esophagus, and not detected in skin and small intestine. Expressed in epithelial cells of choroid plexus, ependyma, glomerulus and alveolus, in mesothelial cells and in endothelia of lymphatic vessels. Also expressed in stromal cells of peripheral lymphoid tissue and thymic epithelial cells. Detected in carcinoma cell lines and cultured fibroblasts. Expressed at higher levels in colon carcinomas than in normal colon tissue.

It localises to the membrane. Its subcellular location is the cell projection. The protein resides in the lamellipodium membrane. The protein localises to the filopodium membrane. It is found in the microvillus membrane. It localises to the ruffle membrane. Its subcellular location is the membrane raft. The protein resides in the apical cell membrane. The protein localises to the basolateral cell membrane. It is found in the invadopodium. Functionally, mediates effects on cell migration and adhesion through its different partners. During development plays a role in blood and lymphatic vessels separation by binding CLEC1B, triggering CLEC1B activation in platelets and leading to platelet activation and/or aggregation. Interaction with CD9, on the contrary, attenuates platelet aggregation and pulmonary metastasis induced by PDPN. Mediates effects on cell migration and adhesion through its different partners. Through MSN or EZR interaction promotes epithelial-mesenchymal transition (EMT) leading to ERZ phosphorylation and triggering RHOA activation leading to cell migration increase and invasiveness. Interaction with CD44 promotes directional cell migration in epithelial and tumor cells. In lymph nodes (LNs), controls fibroblastic reticular cells (FRCs) adhesion to the extracellular matrix (ECM) and contraction of the actomyosin by maintaining ERM proteins (EZR; MSN and RDX) and MYL9 activation through association with unknown transmembrane proteins. Engagement of CLEC1B by PDPN promotes FRCs relaxation by blocking lateral membrane interactions leading to reduction of ERM proteins (EZR; MSN and RDX) and MYL9 activation. Through binding with LGALS8 may participate in connection of the lymphatic endothelium to the surrounding extracellular matrix. In keratinocytes, induces changes in cell morphology showing an elongated shape, numerous membrane protrusions, major reorganization of the actin cytoskeleton, increased motility and decreased cell adhesion. Controls invadopodia stability and maturation leading to efficient degradation of the extracellular matrix (ECM) in tumor cells through modulation of RHOC activity in order to activate ROCK1/ROCK2 and LIMK1/LIMK2 and inactivation of CFL1. Required for normal lung cell proliferation and alveolus formation at birth. Does not function as a water channel or as a regulator of aquaporin-type water channels. Does not have any effect on folic acid or amino acid transport. This is Podoplanin from Mus musculus (Mouse).